We begin with the raw amino-acid sequence, 444 residues long: ATP-dependent protease ATPase subunit HslU (444 aa).

Residues isoleucine 18, 60–65 (GVGKTE), aspartate 256, glutamate 322, and arginine 394 contribute to the ATP site.

This sequence belongs to the ClpX chaperone family. HslU subfamily. As to quaternary structure, a double ring-shaped homohexamer of HslV is capped on each side by a ring-shaped HslU homohexamer. The assembly of the HslU/HslV complex is dependent on binding of ATP.

The protein resides in the cytoplasm. Its function is as follows. ATPase subunit of a proteasome-like degradation complex; this subunit has chaperone activity. The binding of ATP and its subsequent hydrolysis by HslU are essential for unfolding of protein substrates subsequently hydrolyzed by HslV. HslU recognizes the N-terminal part of its protein substrates and unfolds these before they are guided to HslV for hydrolysis. The protein is ATP-dependent protease ATPase subunit HslU of Klebsiella pneumoniae subsp. pneumoniae (strain ATCC 700721 / MGH 78578).